The sequence spans 93 residues: UPF0473 protein RBAM_024480 (93 aa).

The protein belongs to the UPF0473 family.

The chain is UPF0473 protein RBAM_024480 from Bacillus velezensis (strain DSM 23117 / BGSC 10A6 / LMG 26770 / FZB42) (Bacillus amyloliquefaciens subsp. plantarum).